The following is a 71-amino-acid chain: UPF0337 protein RPA4418 (71 aa).

Residues 1–54 form a disordered region; that stretch reads MGSTMDKIKGQANELAGKAKQGIGEATGSDKLKGEGAIQEAKGHGQQALGNAKD.

Belongs to the UPF0337 (CsbD) family.

The chain is UPF0337 protein RPA4418 from Rhodopseudomonas palustris (strain ATCC BAA-98 / CGA009).